The following is a 220-amino-acid chain: 3-dehydroquinate dehydratase (220 aa).

Residues serine 8, 30 to 32 (ELR), and arginine 63 each bind 3-dehydroquinate. The Proton donor/acceptor role is filled by histidine 114. The active-site Schiff-base intermediate with substrate is the lysine 140. 3-dehydroquinate-binding residues include arginine 174 and glutamine 197.

This sequence belongs to the type-I 3-dehydroquinase family. As to quaternary structure, homodimer.

The catalysed reaction is 3-dehydroquinate = 3-dehydroshikimate + H2O. The protein operates within metabolic intermediate biosynthesis; chorismate biosynthesis; chorismate from D-erythrose 4-phosphate and phosphoenolpyruvate: step 3/7. Involved in the third step of the chorismate pathway, which leads to the biosynthesis of aromatic amino acids. Catalyzes the cis-dehydration of 3-dehydroquinate (DHQ) and introduces the first double bond of the aromatic ring to yield 3-dehydroshikimate. This Saccharolobus solfataricus (strain ATCC 35092 / DSM 1617 / JCM 11322 / P2) (Sulfolobus solfataricus) protein is 3-dehydroquinate dehydratase.